We begin with the raw amino-acid sequence, 274 residues long: 2-dehydro-3-deoxyphosphooctonate aldolase (274 aa).

The protein belongs to the KdsA family.

The protein localises to the cytoplasm. It catalyses the reaction D-arabinose 5-phosphate + phosphoenolpyruvate + H2O = 3-deoxy-alpha-D-manno-2-octulosonate-8-phosphate + phosphate. The protein operates within carbohydrate biosynthesis; 3-deoxy-D-manno-octulosonate biosynthesis; 3-deoxy-D-manno-octulosonate from D-ribulose 5-phosphate: step 2/3. Its pathway is bacterial outer membrane biogenesis; lipopolysaccharide biosynthesis. In Legionella pneumophila (strain Corby), this protein is 2-dehydro-3-deoxyphosphooctonate aldolase.